Reading from the N-terminus, the 160-residue chain is MASNKVVFSVLLLAVVSVLAATATMAEYHHQDQVVYTPAPLCQPGMGYPMYPLPRCRALVKRQCVGRGTAAAAEQVRRDCCRQLAAVDDSWCRCEAISHMLGGIYRELGAPDVGHPMSEVFRGCRRGDLERAAASLPAFCNVDIPNGGGGVCYWLARSGY.

An N-terminal signal peptide occupies residues 1–26 (MASNKVVFSVLLLAVVSVLAATATMA). 5 disulfide bridges follow: Cys42-Cys92, Cys56-Cys80, Cys64-Cys124, Cys81-Cys140, and Cys94-Cys152.

It belongs to the protease inhibitor I6 (cereal trypsin/alpha-amylase inhibitor) family. In terms of processing, five disulfide bonds are present.

Its subcellular location is the secreted. Its function is as follows. Seed storage protein. The chain is Seed allergenic protein RA5 (RA5) from Oryza sativa subsp. japonica (Rice).